A 382-amino-acid polypeptide reads, in one-letter code: RNA binding protein fox-1 homolog 1 (382 aa).

The segment at 1-121 is disordered; it reads MNCEREQLRG…NKSQPKRLHV (121 aa). Residues 70 to 87 show a composition bias toward polar residues; it reads QTHSEQSPADTSAQTVSG. Over residues 88-99 the composition is skewed to low complexity; the sequence is TATQTDDAAPTD. Polar residues predominate over residues 100–113; that stretch reads GQPQTQPSENTENK. The RRM domain occupies 117 to 193; the sequence is KRLHVSNIPF…RKIEVNNATA (77 aa). Residue Arg-317 is modified to Asymmetric dimethylarginine. Residues 357–382 form a disordered region; that stretch reads MPQGSSPSTDFRGAKLHTSRPLLSGS.

In terms of assembly, binds to the C-terminus of ATXN2.

The protein localises to the nucleus. Its subcellular location is the cytoplasm. Its function is as follows. RNA-binding protein that regulates alternative splicing events by binding to 5'-UGCAUGU-3' elements. Prevents binding of U2AF2 to the 3'-splice site. Regulates alternative splicing of tissue-specific exons and of differentially spliced exons during erythropoiesis. In Pongo abelii (Sumatran orangutan), this protein is RNA binding protein fox-1 homolog 1 (RBFOX1).